The sequence spans 83 residues: Antitoxin ParD1 (83 aa).

A coiled-coil region spans residues 33–60; the sequence is IRSALRLLEDRETQLRALREALEAGERS. The segment at 54–83 is disordered; it reads LEAGERSGSSTPFDFDGFLGRKRADASRGR.

Belongs to the ParD antitoxin family.

Its function is as follows. Antitoxin component of a type II toxin-antitoxin (TA) system. This chain is Antitoxin ParD1 (parD1), found in Mycobacterium tuberculosis (strain CDC 1551 / Oshkosh).